The sequence spans 284 residues: 2-dehydro-3-deoxyphosphooctonate aldolase (284 aa).

Belongs to the KdsA family.

The protein localises to the cytoplasm. The enzyme catalyses D-arabinose 5-phosphate + phosphoenolpyruvate + H2O = 3-deoxy-alpha-D-manno-2-octulosonate-8-phosphate + phosphate. Its pathway is carbohydrate biosynthesis; 3-deoxy-D-manno-octulosonate biosynthesis; 3-deoxy-D-manno-octulosonate from D-ribulose 5-phosphate: step 2/3. The protein operates within bacterial outer membrane biogenesis; lipopolysaccharide biosynthesis. The protein is 2-dehydro-3-deoxyphosphooctonate aldolase of Histophilus somni (strain 129Pt) (Haemophilus somnus).